The primary structure comprises 296 residues: Nucleotide-binding protein spyM18_0713 (296 aa).

An ATP-binding site is contributed by 13–20; it reads GMSGAGKT. 63–66 serves as a coordination point for GTP; sequence DMRS.

The protein belongs to the RapZ-like family.

Its function is as follows. Displays ATPase and GTPase activities. The polypeptide is Nucleotide-binding protein spyM18_0713 (Streptococcus pyogenes serotype M18 (strain MGAS8232)).